Consider the following 152-residue polypeptide: UPF0260 protein BR1477/BS1330_I1471 (152 aa).

It belongs to the UPF0260 family.

The chain is UPF0260 protein BR1477/BS1330_I1471 from Brucella suis biovar 1 (strain 1330).